The chain runs to 145 residues: 3-hydroxyacyl-[acyl-carrier-protein] dehydratase FabZ (145 aa).

His-48 is a catalytic residue.

This sequence belongs to the thioester dehydratase family. FabZ subfamily.

The protein resides in the cytoplasm. It catalyses the reaction a (3R)-hydroxyacyl-[ACP] = a (2E)-enoyl-[ACP] + H2O. In terms of biological role, involved in unsaturated fatty acids biosynthesis. Catalyzes the dehydration of short chain beta-hydroxyacyl-ACPs and long chain saturated and unsaturated beta-hydroxyacyl-ACPs. The sequence is that of 3-hydroxyacyl-[acyl-carrier-protein] dehydratase FabZ from Saccharophagus degradans (strain 2-40 / ATCC 43961 / DSM 17024).